A 282-amino-acid chain; its full sequence is F-actin-capping protein subunit alpha (282 aa).

This sequence belongs to the F-actin-capping protein alpha subunit family. As to quaternary structure, component of the F-actin capping complex, composed of a heterodimer of an alpha and a beta subunit.

The protein localises to the cytoplasm. It is found in the cytoskeleton. F-actin-capping proteins bind in a Ca(2+)-independent manner to the fast growing ends of actin filaments (barbed end) thereby blocking the exchange of subunits at these ends. Unlike other capping proteins (such as gelsolin and severin), these proteins do not sever actin filaments. In Caenorhabditis elegans, this protein is F-actin-capping protein subunit alpha (cap-1).